A 799-amino-acid polypeptide reads, in one-letter code: RasGAP-activating-like protein 1 (799 aa).

2 consecutive C2 domains span residues 1–105 and 116–231; these read MAKS…DSWI and VQGE…NGWF. 10 residues coordinate Ca(2+): aspartate 21, aspartate 27, aspartate 74, aspartate 76, aspartate 82, aspartate 149, aspartate 155, aspartate 202, aspartate 204, and aspartate 210. One can recognise a Ras-GAP domain in the interval 316 to 544; sequence GLAGPFLDYL…SRVRDFLDQL (229 aa). Threonine 400 carries the phosphothreonine modification. The PH domain maps to 565–672; that stretch reads TIVREGFLLK…WLSALRKASA (108 aa). The segment at 674–710 adopts a Btk-type zinc-finger fold; it reads NPGKLVACHPGAFRSGRWTCCLQAERSAAGCSRTHSA. Histidine 682, cysteine 693, cysteine 694, and cysteine 704 together coordinate Zn(2+).

The cofactor is Ca(2+).

In terms of biological role, probable inhibitory regulator of the Ras-cyclic AMP pathway. Plays a role in dendrite formation by melanocytes. The polypeptide is RasGAP-activating-like protein 1 (Mus musculus (Mouse)).